We begin with the raw amino-acid sequence, 189 residues long: Elongation factor P (189 aa).

An N6-(3,6-diaminohexanoyl)-5-hydroxylysine modification is found at K34.

This sequence belongs to the elongation factor P family. Post-translationally, may be beta-lysylated on the epsilon-amino group of Lys-34 by the combined action of EpmA and EpmB, and then hydroxylated on the C5 position of the same residue by EpmC (if this protein is present). Lysylation is critical for the stimulatory effect of EF-P on peptide-bond formation. The lysylation moiety may extend toward the peptidyltransferase center and stabilize the terminal 3-CCA end of the tRNA. Hydroxylation of the C5 position on Lys-34 may allow additional potential stabilizing hydrogen-bond interactions with the P-tRNA.

The protein localises to the cytoplasm. It functions in the pathway protein biosynthesis; polypeptide chain elongation. Involved in peptide bond synthesis. Alleviates ribosome stalling that occurs when 3 or more consecutive Pro residues or the sequence PPG is present in a protein, possibly by augmenting the peptidyl transferase activity of the ribosome. Modification of Lys-34 is required for alleviation. The polypeptide is Elongation factor P (Dichelobacter nodosus (strain VCS1703A)).